Consider the following 554-residue polypeptide: Dihydroxy-acid dehydratase (554 aa).

Cys51 provides a ligand contact to [2Fe-2S] cluster. Residue Asp83 participates in Mg(2+) binding. Position 124 (Cys124) interacts with [2Fe-2S] cluster. Positions 125 and 126 each coordinate Mg(2+). At Lys126 the chain carries N6-carboxylysine. Cys193 is a binding site for [2Fe-2S] cluster. Residue Glu444 participates in Mg(2+) binding. Ser470 serves as the catalytic Proton acceptor.

Belongs to the IlvD/Edd family. Homodimer. The cofactor is [2Fe-2S] cluster. Mg(2+) is required as a cofactor.

It catalyses the reaction (2R)-2,3-dihydroxy-3-methylbutanoate = 3-methyl-2-oxobutanoate + H2O. It carries out the reaction (2R,3R)-2,3-dihydroxy-3-methylpentanoate = (S)-3-methyl-2-oxopentanoate + H2O. The protein operates within amino-acid biosynthesis; L-isoleucine biosynthesis; L-isoleucine from 2-oxobutanoate: step 3/4. It participates in amino-acid biosynthesis; L-valine biosynthesis; L-valine from pyruvate: step 3/4. Its function is as follows. Functions in the biosynthesis of branched-chain amino acids. Catalyzes the dehydration of (2R,3R)-2,3-dihydroxy-3-methylpentanoate (2,3-dihydroxy-3-methylvalerate) into 2-oxo-3-methylpentanoate (2-oxo-3-methylvalerate) and of (2R)-2,3-dihydroxy-3-methylbutanoate (2,3-dihydroxyisovalerate) into 2-oxo-3-methylbutanoate (2-oxoisovalerate), the penultimate precursor to L-isoleucine and L-valine, respectively. The protein is Dihydroxy-acid dehydratase of Vesicomyosocius okutanii subsp. Calyptogena okutanii (strain HA).